Reading from the N-terminus, the 283-residue chain is Para-Rep C7 (283 aa).

In terms of domain architecture, CRESS-DNA virus Rep endonuclease spans 3-96 (SIRATHWCFT…IAGPWEYGTW (94 aa)). An RCR-1 motif is present at residues 10 to 13 (CFTL). A divalent metal cation is bound by residues Glu-36 and His-42. The RCR-2 motif lies at 42-44 (HLQ). Positions 51-71 (KHVTLKKMKELLPGAHLEMAK) match the Nuclear localization signal motif. Tyr-79 serves as the catalytic For DNA cleavage activity. The RCR-3 signature appears at 79 to 82 (YCQK). Glu-84 provides a ligand contact to a divalent metal cation. The Nuclear localization signal signature appears at 96-102 (WISSGSH). 178–180 (GKS) provides a ligand contact to ATP.

The protein belongs to the nanoviridea/circoviridae replication-associated protein family. Homooligomer (Potential). Rep binds to repeated DNA motifs (iterons). It depends on Mg(2+) as a cofactor. Requires Mn(2+) as cofactor.

It localises to the host nucleus. It catalyses the reaction ATP + H2O = ADP + phosphate + H(+). In terms of biological role, initiates and terminates the replication only of its own subviral DNA molecule. The closed circular ssDNA genome is first converted to a superhelical dsDNA. Rep binds a specific hairpin at the genome origin of replication. Introduces an endonucleolytic nick within the intergenic region of the genome, thereby initiating the rolling circle replication (RCR). Following cleavage, binds covalently to the 5'-phosphate of DNA as a tyrosyl ester. The cleavage gives rise to a free 3'-OH that serves as a primer for the cellular DNA polymerase. The polymerase synthesizes the (+) strand DNA by rolling circle mechanism. After one round of replication, a Rep-catalyzed nucleotidyl transfer reaction releases a circular single-stranded virus genome, thereby terminating the replication. Displays origin-specific DNA cleavage, nucleotidyl transferase, ATPase and helicase activities. In Faba bean necrotic yellows C7 alphasatellite (FBNYC7A), this protein is Para-Rep C7 (C7).